The chain runs to 627 residues: 1-deoxy-D-xylulose-5-phosphate synthase (627 aa).

Thiamine diphosphate is bound by residues histidine 74 and 115-117; that span reads GHA. Aspartate 146 contacts Mg(2+). Thiamine diphosphate is bound by residues 147–148, asparagine 175, phenylalanine 284, and glutamate 364; that span reads AA. Residue asparagine 175 coordinates Mg(2+).

It belongs to the transketolase family. DXPS subfamily. In terms of assembly, homodimer. The cofactor is Mg(2+). Thiamine diphosphate is required as a cofactor.

It carries out the reaction D-glyceraldehyde 3-phosphate + pyruvate + H(+) = 1-deoxy-D-xylulose 5-phosphate + CO2. Its pathway is metabolic intermediate biosynthesis; 1-deoxy-D-xylulose 5-phosphate biosynthesis; 1-deoxy-D-xylulose 5-phosphate from D-glyceraldehyde 3-phosphate and pyruvate: step 1/1. Functionally, catalyzes the acyloin condensation reaction between C atoms 2 and 3 of pyruvate and glyceraldehyde 3-phosphate to yield 1-deoxy-D-xylulose-5-phosphate (DXP). This Acidobacterium capsulatum (strain ATCC 51196 / DSM 11244 / BCRC 80197 / JCM 7670 / NBRC 15755 / NCIMB 13165 / 161) protein is 1-deoxy-D-xylulose-5-phosphate synthase.